Reading from the N-terminus, the 215-residue chain is Oligoribonuclease (215 aa).

The Exonuclease domain maps to L5 to L170. Residue Y127 is part of the active site. The disordered stretch occupies residues L196–G215. Residues A202–G215 are compositionally biased toward low complexity.

Belongs to the oligoribonuclease family.

It is found in the cytoplasm. Functionally, 3'-to-5' exoribonuclease specific for small oligoribonucleotides. The polypeptide is Oligoribonuclease (Mycolicibacterium paratuberculosis (strain ATCC BAA-968 / K-10) (Mycobacterium paratuberculosis)).